The primary structure comprises 100 residues: uncharacterized protein (100 aa).

The chain crosses the membrane as a helical span at residues 62 to 82; the sequence is IPIVIIVSIFILLIIGSISLY.

The protein localises to the membrane. This is an uncharacterized protein from Dictyostelium discoideum (Social amoeba).